Reading from the N-terminus, the 275-residue chain is Nitrogenase iron protein 1 (275 aa).

9 to 16 (GKGGIGKS) provides a ligand contact to ATP. Cys-97 is a binding site for [4Fe-4S] cluster. Arg-100 is modified (ADP-ribosylarginine; by dinitrogenase reductase ADP-ribosyltransferase). Position 132 (Cys-132) interacts with [4Fe-4S] cluster.

The protein belongs to the NifH/BchL/ChlL family. Homodimer. It depends on [4Fe-4S] cluster as a cofactor. Post-translationally, the reversible ADP-ribosylation of Arg-100 inactivates the nitrogenase reductase and regulates nitrogenase activity.

It carries out the reaction N2 + 8 reduced [2Fe-2S]-[ferredoxin] + 16 ATP + 16 H2O = H2 + 8 oxidized [2Fe-2S]-[ferredoxin] + 2 NH4(+) + 16 ADP + 16 phosphate + 6 H(+). Its function is as follows. The key enzymatic reactions in nitrogen fixation are catalyzed by the nitrogenase complex, which has 2 components: the iron protein and the molybdenum-iron protein. The chain is Nitrogenase iron protein 1 (nifH1) from Methanothermobacter thermautotrophicus (strain ATCC 29096 / DSM 1053 / JCM 10044 / NBRC 100330 / Delta H) (Methanobacterium thermoautotrophicum).